The chain runs to 903 residues: Protein translocase subunit SecA (903 aa).

Residues Gln-87, 105–109 (GEGKT), and Asp-494 each bind ATP. The disordered stretch occupies residues 861 to 883 (SGSQGAAPRQPVRAEGKKVGRND). Positions 872–881 (VRAEGKKVGR) are enriched in basic and acidic residues. The Zn(2+) site is built by Cys-885, Cys-887, Cys-896, and Cys-897.

Belongs to the SecA family. Monomer and homodimer. Part of the essential Sec protein translocation apparatus which comprises SecA, SecYEG and auxiliary proteins SecDF. Other proteins may also be involved. It depends on Zn(2+) as a cofactor.

Its subcellular location is the cell membrane. It is found in the cytoplasm. It carries out the reaction ATP + H2O + cellular proteinSide 1 = ADP + phosphate + cellular proteinSide 2.. In terms of biological role, part of the Sec protein translocase complex. Interacts with the SecYEG preprotein conducting channel. Has a central role in coupling the hydrolysis of ATP to the transfer of proteins into and across the cell membrane, serving as an ATP-driven molecular motor driving the stepwise translocation of polypeptide chains across the membrane. The protein is Protein translocase subunit SecA of Symbiobacterium thermophilum (strain DSM 24528 / JCM 14929 / IAM 14863 / T).